A 323-amino-acid polypeptide reads, in one-letter code: Aspartate carbamoyltransferase catalytic subunit (323 aa).

Residues Arg-55 and Thr-56 each contribute to the carbamoyl phosphate site. Residue Lys-83 coordinates L-aspartate. Arg-105, His-133, and Gln-136 together coordinate carbamoyl phosphate. 2 residues coordinate L-aspartate: Arg-166 and Arg-220. Residues Gly-261 and Pro-262 each coordinate carbamoyl phosphate.

Belongs to the aspartate/ornithine carbamoyltransferase superfamily. ATCase family. As to quaternary structure, heterododecamer (2C3:3R2) of six catalytic PyrB chains organized as two trimers (C3), and six regulatory PyrI chains organized as three dimers (R2).

The catalysed reaction is carbamoyl phosphate + L-aspartate = N-carbamoyl-L-aspartate + phosphate + H(+). It participates in pyrimidine metabolism; UMP biosynthesis via de novo pathway; (S)-dihydroorotate from bicarbonate: step 2/3. Catalyzes the condensation of carbamoyl phosphate and aspartate to form carbamoyl aspartate and inorganic phosphate, the committed step in the de novo pyrimidine nucleotide biosynthesis pathway. In Acidothermus cellulolyticus (strain ATCC 43068 / DSM 8971 / 11B), this protein is Aspartate carbamoyltransferase catalytic subunit.